Reading from the N-terminus, the 239-residue chain is tRNA (guanine-N(1)-)-methyltransferase (239 aa).

Residues Gly-113 and 137-142 (LGDYVL) each bind S-adenosyl-L-methionine.

The protein belongs to the RNA methyltransferase TrmD family. In terms of assembly, homodimer.

It is found in the cytoplasm. The catalysed reaction is guanosine(37) in tRNA + S-adenosyl-L-methionine = N(1)-methylguanosine(37) in tRNA + S-adenosyl-L-homocysteine + H(+). Functionally, specifically methylates guanosine-37 in various tRNAs. This chain is tRNA (guanine-N(1)-)-methyltransferase, found in Cutibacterium acnes (strain DSM 16379 / KPA171202) (Propionibacterium acnes).